Reading from the N-terminus, the 836-residue chain is Enhancer of polycomb homolog 1 (836 aa).

Lysine 319 is covalently cross-linked (Glycyl lysine isopeptide (Lys-Gly) (interchain with G-Cter in SUMO2)). 2 disordered regions span residues lysine 335–alanine 360 and tyrosine 372–proline 401. Over residues proline 346 to alanine 360 the composition is skewed to low complexity. Serine 539 is modified (phosphoserine). Lysine 673 participates in a covalent cross-link: Glycyl lysine isopeptide (Lys-Gly) (interchain with G-Cter in SUMO2). The tract at residues valine 802–asparagine 829 is disordered. The segment covering valine 811–lysine 820 has biased composition (basic and acidic residues).

It belongs to the enhancer of polycomb family. As to quaternary structure, component of the NuA4 histone acetyltransferase complex which contains the catalytic subunit KAT5/TIP60 and the subunits EP400, TRRAP/PAF400, BRD8/SMAP, EPC1, DMAP1/DNMAP1, RUVBL1/TIP49, RUVBL2, ING3, actin, ACTL6A/BAF53A, MORF4L1/MRG15, MORF4L2/MRGX, MRGBP, YEATS4/GAS41, VPS72/YL1 and MEAF6. KAT5/TIP60, EPC1, and ING3 together constitute a minimal HAT complex termed Piccolo NuA4. Component of a NuA4-related complex which contains EP400, TRRAP/PAF400, SRCAP, BRD8/SMAP, EPC1, DMAP1/DNMAP1, RUVBL1/TIP49, RUVBL2, actin, ACTL6A/BAF53A, VPS72 and YEATS4/GAS41. Interacts with TRIM27. Interacts with MBTD1; interaction is direct and promotes recruitment of MBTD1 into the NuA4 histone acetyltransferase complex.

Its subcellular location is the nucleus. It is found in the cytoplasm. Its function is as follows. Component of the NuA4 histone acetyltransferase (HAT) complex, a multiprotein complex involved in transcriptional activation of select genes principally by acetylation of nucleosomal histones H4 and H2A. The NuA4 complex plays a direct role in repair of DNA double-strand breaks (DSBs) by promoting homologous recombination (HR). The NuA4 complex is also required for spermatid development by promoting acetylation of histones: histone acetylation is required for histone replacement during the transition from round to elongating spermatids. In the NuA4 complex, EPC1 is required to recruit MBTD1 into the complex. The polypeptide is Enhancer of polycomb homolog 1 (Homo sapiens (Human)).